We begin with the raw amino-acid sequence, 152 residues long: Small ribosomal subunit protein uS13A (152 aa).

It belongs to the universal ribosomal protein uS13 family. In terms of assembly, component of the small ribosomal subunit (SSU). Mature yeast ribosomes consist of a small (40S) and a large (60S) subunit. The 40S small subunit contains 1 molecule of ribosomal RNA (18S rRNA) and at least 33 different proteins. The large 60S subunit contains 3 rRNA molecules (25S, 5.8S and 5S rRNA) and at least 46 different proteins.

The protein localises to the cytoplasm. Functionally, component of the ribosome, a large ribonucleoprotein complex responsible for the synthesis of proteins in the cell. The small ribosomal subunit (SSU) binds messenger RNAs (mRNAs) and translates the encoded message by selecting cognate aminoacyl-transfer RNA (tRNA) molecules. The large subunit (LSU) contains the ribosomal catalytic site termed the peptidyl transferase center (PTC), which catalyzes the formation of peptide bonds, thereby polymerizing the amino acids delivered by tRNAs into a polypeptide chain. The nascent polypeptides leave the ribosome through a tunnel in the LSU and interact with protein factors that function in enzymatic processing, targeting, and the membrane insertion of nascent chains at the exit of the ribosomal tunnel. In Schizosaccharomyces pombe (strain 972 / ATCC 24843) (Fission yeast), this protein is Small ribosomal subunit protein uS13A (rps1801).